Reading from the N-terminus, the 439-residue chain is Nuclear distribution protein PAC1 (439 aa).

Positions 55 to 90 (NSIVRLQSKIMELEKNCEELQKSIDEQQSSTNQISN) form a coiled coil. 7 WD repeats span residues 106 to 145 (TLDA…LPLQ), 149 to 193 (AHMD…TLSH), 199 to 240 (GHEH…CIKS), 243 to 282 (PHTQ…SMGI), 295 to 335 (IPDP…FIPH), 355 to 392 (DHNS…LSTT), and 402 to 438 (NKGF…TSFM).

Belongs to the WD repeat LIS1/nudF family. Self-associates. Interacts with NDL1 and dynein.

The protein resides in the cytoplasm. It is found in the cytoskeleton. Its subcellular location is the spindle pole. Functionally, positively regulates the activity of the minus-end directed microtubule motor protein dynein. Plays a central role in positioning the mitotic spindle at the bud neck during cell division. Targets cytoplasmic dynein to microtubule plus ends, thereby promoting dynein-mediated microtubule sliding along the bud cortex and consequently the movement of the mitotic spindle to the bud neck. In Kluyveromyces lactis (strain ATCC 8585 / CBS 2359 / DSM 70799 / NBRC 1267 / NRRL Y-1140 / WM37) (Yeast), this protein is Nuclear distribution protein PAC1.